The following is a 208-amino-acid chain: Protein-L-isoaspartate O-methyltransferase (208 aa).

Ser59 is an active-site residue.

Belongs to the methyltransferase superfamily. L-isoaspartyl/D-aspartyl protein methyltransferase family.

The protein resides in the cytoplasm. It carries out the reaction [protein]-L-isoaspartate + S-adenosyl-L-methionine = [protein]-L-isoaspartate alpha-methyl ester + S-adenosyl-L-homocysteine. Its function is as follows. Catalyzes the methyl esterification of L-isoaspartyl residues in peptides and proteins that result from spontaneous decomposition of normal L-aspartyl and L-asparaginyl residues. It plays a role in the repair and/or degradation of damaged proteins. This is Protein-L-isoaspartate O-methyltransferase from Klebsiella pneumoniae subsp. pneumoniae (strain ATCC 700721 / MGH 78578).